Consider the following 162-residue polypeptide: Phosphopantetheine adenylyltransferase (162 aa).

Thr10 is a substrate binding site. Residues Thr10–Phe11 and His18 contribute to the ATP site. Lys42, Met74, and Arg88 together coordinate substrate. ATP is bound by residues Gly89 to Arg91, Glu99, and Tyr124 to Thr130.

The protein belongs to the bacterial CoaD family. As to quaternary structure, homohexamer. Mg(2+) serves as cofactor.

It is found in the cytoplasm. It carries out the reaction (R)-4'-phosphopantetheine + ATP + H(+) = 3'-dephospho-CoA + diphosphate. The protein operates within cofactor biosynthesis; coenzyme A biosynthesis; CoA from (R)-pantothenate: step 4/5. Reversibly transfers an adenylyl group from ATP to 4'-phosphopantetheine, yielding dephospho-CoA (dPCoA) and pyrophosphate. In Aliivibrio fischeri (strain ATCC 700601 / ES114) (Vibrio fischeri), this protein is Phosphopantetheine adenylyltransferase.